Here is a 164-residue protein sequence, read N- to C-terminus: Aspartic proteinase nepenthesin-1 (164 aa).

Residues 17–164 (YLMXLSIGTP…VSFVSAQCGA (148 aa)) form the Peptidase A1 domain. The active site involves D35. Residue N93 is glycosylated (N-linked (GlcNAc...) asparagine).

The protein belongs to the peptidase A1 family. As to expression, parenchymal cells surrounding the secretory glands.

It localises to the secreted. It carries out the reaction Similar to pepsin, but also cleaves on either side of Asp and at Lys-|-Arg.. With respect to regulation, inhibited by pepstatin and by diazoacetyl-D,L-norleucine methyl ester (DAN) in the presence of Cu(2+) ions. Extracellular proteinase found in the pitcher fluid of carnivorous plants. Digest prey for nitrogen uptake. In Nepenthes distillatoria (Pitcher plant), this protein is Aspartic proteinase nepenthesin-1.